The chain runs to 365 residues: RISC-loading complex subunit TARBP2 (365 aa).

Sufficient for interaction with PRKRA regions lie at residues 22–105 (MLAA…EPAL), 151–233 (SPQQ…DARD), and 286–365 (LGAL…AGSK). The DRBM 1 domain maps to 30-97 (TPISLLQEYG…AEVALKHLKG (68 aa)). Residue Ser151 is modified to Phosphoserine. DRBM domains are found at residues 158–226 (NPVG…RVHT) and 292–360 (ACCS…YLRI). The sufficient for interaction with DICER1 stretch occupies residues 227-365 (VPLDARDGNE…QYLRIMAGSK (139 aa)).

This sequence belongs to the TARBP2 family. Self-associates. Component of the RISC loading complex (RLC), or micro-RNA (miRNA) loading complex (miRLC), which is composed of DICER1, AGO2 and TARBP2. Note that the trimeric RLC/miRLC is also referred to as RISC. Interacts with EIF2AK2/PKR and inhibits its protein kinase activity. Interacts with DHX9. Interacts with DICER1 and PRKRA. Interacts with DICER1, AGO2, MOV10, EIF6 and RPL7A (60S ribosome subunit); they form a large RNA-induced silencing complex (RISC). Interacts with IRF7; this interaction prevents IRF7 phosphorylation and activation.

The protein resides in the cytoplasm. Its subcellular location is the perinuclear region. It localises to the nucleus. Required for formation of the RNA induced silencing complex (RISC). Component of the RISC loading complex (RLC), also known as the micro-RNA (miRNA) loading complex (miRLC), which is composed of DICER1, AGO2 and TARBP2. Within the RLC/miRLC, DICER1 and TARBP2 are required to process precursor miRNAs (pre-miRNAs) to mature miRNAs and then load them onto AGO2. AGO2 bound to the mature miRNA constitutes the minimal RISC and may subsequently dissociate from DICER1 and TARBP2. May also play a role in the production of short interfering RNAs (siRNAs) from double-stranded RNA (dsRNA) by DICER1. Binds in vitro to the PRM1 3'-UTR. Seems to act as a repressor of translation. For some pre-miRNA substrates, may also alter the choice of cleavage site by DICER1. Negatively regulates IRF7-mediated IFN-beta signaling triggered by viral infection by inhibiting the phosphorylation of IRF7 and promoting its 'Lys'-48-linked ubiquitination and degradation. The sequence is that of RISC-loading complex subunit TARBP2 (Tarbp2) from Mus musculus (Mouse).